The sequence spans 170 residues: uncharacterized protein (170 aa).

The protein belongs to the mimivirus L223/L227/L812 family.

This is an uncharacterized protein from Acanthamoeba polyphaga mimivirus (APMV).